A 544-amino-acid polypeptide reads, in one-letter code: Methionine--tRNA ligase (544 aa).

The short motif at 10–20 is the 'HIGH' region element; that stretch reads PYANGSLHLGH. Cys141, Cys144, Cys153, and Cys156 together coordinate Zn(2+). A 'KMSKS' region motif is present at residues 329–333; that stretch reads KLSTS. Thr332 lines the ATP pocket.

The protein belongs to the class-I aminoacyl-tRNA synthetase family. MetG type 1 subfamily. As to quaternary structure, monomer. Zn(2+) is required as a cofactor.

It localises to the cytoplasm. It carries out the reaction tRNA(Met) + L-methionine + ATP = L-methionyl-tRNA(Met) + AMP + diphosphate. Its function is as follows. Is required not only for elongation of protein synthesis but also for the initiation of all mRNA translation through initiator tRNA(fMet) aminoacylation. The protein is Methionine--tRNA ligase of Bacillus mycoides (strain KBAB4) (Bacillus weihenstephanensis).